Reading from the N-terminus, the 350-residue chain is Aminomethyltransferase (350 aa).

It belongs to the GcvT family. In terms of assembly, the glycine cleavage system is composed of four proteins: P, T, L and H.

It catalyses the reaction N(6)-[(R)-S(8)-aminomethyldihydrolipoyl]-L-lysyl-[protein] + (6S)-5,6,7,8-tetrahydrofolate = N(6)-[(R)-dihydrolipoyl]-L-lysyl-[protein] + (6R)-5,10-methylene-5,6,7,8-tetrahydrofolate + NH4(+). Its function is as follows. The glycine cleavage system catalyzes the degradation of glycine. The sequence is that of Aminomethyltransferase from Aquifex aeolicus (strain VF5).